The following is a 229-amino-acid chain: Cytidylate kinase (229 aa).

12–20 contacts ATP; it reads GPSGTGKSS.

Belongs to the cytidylate kinase family. Type 1 subfamily.

The protein resides in the cytoplasm. The enzyme catalyses CMP + ATP = CDP + ADP. It catalyses the reaction dCMP + ATP = dCDP + ADP. The sequence is that of Cytidylate kinase from Rhodococcus opacus (strain B4).